Consider the following 735-residue polypeptide: Wall-associated receptor kinase 1 (735 aa).

The N-terminal stretch at 1-24 (MKVQEGLFLVAIFFSLACTQLVKG) is a signal peptide. The Extracellular segment spans residues 25–331 (QHQPGENCQN…TTTMSCKRKE (307 aa)). Asn38, Asn56, Asn80, Asn90, Asn113, Asn140, Asn209, Asn235, and Asn250 each carry an N-linked (GlcNAc...) asparagine glycan. A polygalacturonic acid-binding region spans residues 67 to 254 (RPHVLSDIEV…SICGGNSTCL (188 aa)). In terms of domain architecture, EGF-like 1 spans 234–281 (GNQTCEQVGSTSICGGNSTCLDSTPRNGYICRCNEGFDGNPYLSAGCQ). Disulfide bonds link Cys238–Cys253, Cys247–Cys264, Cys266–Cys280, Cys286–Cys303, Cys297–Cys312, and Cys314–Cys327. Positions 282–328 (DVNECTTSSTIHRHNCSDPKTCRNKVGGFYCKCQSGYRLDTTTMSCK) constitute an EGF-like 2; calcium-binding domain. Asn296 carries an N-linked (GlcNAc...) asparagine glycan. Residues 332–352 (FAWTTILLVTTIGFLVILLGV) traverse the membrane as a helical segment. The Cytoplasmic segment spans residues 353-735 (ACIQQRMKHL…VAILDIETGR (383 aa)). At Thr398 the chain carries Phosphothreonine. The Protein kinase domain occupies 409–692 (YAESRILGQG…RVEKTKHKWS (284 aa)). ATP is bound by residues 415–423 (LGQGGQGTV) and Lys437. At Tyr482 the chain carries Phosphotyrosine. Asp534 (proton acceptor) is an active-site residue. Thr568 and Thr573 each carry phosphothreonine. Tyr581 is subject to Phosphotyrosine.

This sequence belongs to the protein kinase superfamily. Ser/Thr protein kinase family. In terms of assembly, interacts with the glycine-rich proteins GRP3 and GRP3S, and the type 2C protein phosphatase KAPP. Component of a 500 kDa complex, composed of WAK1, GRP3 and KAPP. Interacts with the oxygen-evolving enhancer protein 2 (OEE2). Predominantly expressed in green tissues such as stems and leaves. Detected at organ junctions.

It localises to the membrane. The enzyme catalyses L-seryl-[protein] + ATP = O-phospho-L-seryl-[protein] + ADP + H(+). It catalyses the reaction L-threonyl-[protein] + ATP = O-phospho-L-threonyl-[protein] + ADP + H(+). Serine/threonine-protein kinase that may function as a signaling receptor of extracellular matrix component. Binding to pectin may have significance in the control of cell expansion, morphogenesis and development. Required during plant's response to pathogen infection and in plant defense against heavy metal toxicity. Phosphorylates the oxygen-evolving enhancer protein 2 (OEE2) in an GRP-3-dependent manner. The protein is Wall-associated receptor kinase 1 (WAK1) of Arabidopsis thaliana (Mouse-ear cress).